A 222-amino-acid polypeptide reads, in one-letter code: Glutathione S-transferase A2 (222 aa).

A2 carries the N-acetylalanine modification. The GST N-terminal domain occupies G3 to G83. Position 4 is an N6-succinyllysine (K4). Glutathione-binding positions include Y9, K45, Q54–V55, and Q67–T68. The GST C-terminal domain occupies D85–L208.

This sequence belongs to the GST superfamily. Alpha family. As to quaternary structure, homodimer. Heterodimer of GSTA1 and GSTA2. As to expression, expressed in the kidney.

It carries out the reaction RX + glutathione = an S-substituted glutathione + a halide anion + H(+). In terms of biological role, catalyzes the conjugation of glutathione to a large variety of electrophilic compounds. In Mus musculus (Mouse), this protein is Glutathione S-transferase A2 (Gsta2).